The sequence spans 513 residues: V-type proton ATPase subunit B, kidney isoform (513 aa).

A compositionally biased stretch (polar residues) spans Met-1 to Asp-18. The disordered stretch occupies residues Met-1–Thr-21. Arg-394 contributes to the ATP binding site. A PDZ-binding motif is present at residues Asp-510–Leu-513.

The protein belongs to the ATPase alpha/beta chains family. As to quaternary structure, V-ATPase is a heteromultimeric enzyme made up of two complexes: the ATP-hydrolytic V1 complex and the proton translocation V0 complex. The V1 complex consists of three catalytic AB heterodimers that form a heterohexamer, three peripheral stalks each consisting of EG heterodimers, one central rotor including subunits D and F, and the regulatory subunits C and H. The proton translocation complex V0 consists of the proton transport subunit a, a ring of proteolipid subunits c9c'', rotary subunit d, subunits e and f, and the accessory subunits ATP6AP1/Ac45 and ATP6AP2/PRR. Forms a complex with NHERF1 and SCL4A7. In terms of tissue distribution, highly expressed in the kidney; found in early distal nephron, encompassing thick ascending limbs and distal convoluted tubules and in the alpha-intercalated cells of the cortical collecting ducts (at protein level). Expressed in the olfactory epithelium (at protein level). Expressed at lower levels in the testis.

Its subcellular location is the apical cell membrane. It localises to the basolateral cell membrane. Functionally, non-catalytic subunit of the V1 complex of vacuolar(H+)-ATPase (V-ATPase), a multisubunit enzyme composed of a peripheral complex (V1) that hydrolyzes ATP and a membrane integral complex (V0) that translocates protons. V-ATPase is responsible for acidifying and maintaining the pH of intracellular compartments and in some cell types, is targeted to the plasma membrane, where it is responsible for acidifying the extracellular environment. Essential for the proper assembly and activity of V-ATPase. In renal intercalated cells, mediates secretion of protons (H+) into the urine thereby ensuring correct urinary acidification. Required for optimal olfactory function by mediating the acidification of the nasal olfactory epithelium. The chain is V-type proton ATPase subunit B, kidney isoform (Atp6v1b1) from Mus musculus (Mouse).